A 169-amino-acid polypeptide reads, in one-letter code: Unfolded protein response-inducible protein 1 (169 aa).

In terms of biological role, involved in the unfolded protein response (UPR), a transcriptional response which up-regulates genes that enable cells to cope with misfolded, endoplasmic reticulum-retained proteins. UPR is part of the endoplasmic reticulum quality control (ERQC) which prevents the exit of misfolded secretory and membrane proteins from the endoplasmic reticulum. This is Unfolded protein response-inducible protein 1 (ULI1) from Saccharomyces cerevisiae (strain ATCC 204508 / S288c) (Baker's yeast).